The primary structure comprises 232 residues: Dehydrogenase OXI1 (232 aa).

A signal peptide spans 1–20; sequence MTETFKVAITFVSPSSEALA. Leu19 contributes to the NADP(+) binding site. Asn28 carries N-linked (GlcNAc...) asparagine glycosylation. NADP(+) contacts are provided by Asp42, Asn70, and Lys103. Asn117 is a glycosylation site (N-linked (GlcNAc...) asparagine). Residues Ser119 and Ser121 each act as proton donor in the active site. 3 residues coordinate NADP(+): Tyr133, Lys137, and Thr168. Tyr133 acts as the Proton acceptor in catalysis. Lys137 serves as the catalytic Lowers pKa of active site Tyr.

It belongs to the short-chain dehydrogenases/reductases (SDR) family.

It catalyses the reaction a primary alcohol + NAD(+) = an aldehyde + NADH + H(+). The catalysed reaction is a secondary alcohol + NAD(+) = a ketone + NADH + H(+). Its pathway is mycotoxin biosynthesis. Functionally, dehydrogenase; part of the Tox1A locus, one of the 2 loci that mediate the biosynthesis of T-toxin, a family of linear polyketides 37 to 45 carbons in length, of which the major component is 41 carbons, and which leads to high virulence to maize. One of the PKSs (PKS1 or PKS2) could synthesize a precursor, used subsequently by the other PKS as starter unit, to add additional carbons. Variability in the length of the final carbon backbone C35-47 could be achieved by varying the number of condensation cycles, or use of different starter or extender units or might be due to decarboxylation of the penultimate product, catalyzed by DEC1. Additional proteins are required for the biosynthesis of T-toxin, including oxidoreductases RED1, RED2, RED3, LAM1 and OXI1, as well as esterase TOX9. The protein is Dehydrogenase OXI1 of Cochliobolus heterostrophus (strain C4 / ATCC 48331 / race T) (Southern corn leaf blight fungus).